A 159-amino-acid chain; its full sequence is ATP synthase subunit b', chloroplastic (159 aa).

The helical transmembrane segment at 30–47 threads the bilayer; it reads LMALQFLALTIILNLIYY.

It belongs to the ATPase B chain family. F-type ATPases have 2 components, F(1) - the catalytic core - and F(0) - the membrane proton channel. F(1) has five subunits: alpha(3), beta(3), gamma(1), delta(1), epsilon(1). F(0) has four main subunits: a(1), b(1), b'(1) and c(10-14). The alpha and beta chains form an alternating ring which encloses part of the gamma chain. F(1) is attached to F(0) by a central stalk formed by the gamma and epsilon chains, while a peripheral stalk is formed by the delta, b and b' chains.

The protein resides in the plastid. It localises to the chloroplast thylakoid membrane. F(1)F(0) ATP synthase produces ATP from ADP in the presence of a proton or sodium gradient. F-type ATPases consist of two structural domains, F(1) containing the extramembraneous catalytic core and F(0) containing the membrane proton channel, linked together by a central stalk and a peripheral stalk. During catalysis, ATP synthesis in the catalytic domain of F(1) is coupled via a rotary mechanism of the central stalk subunits to proton translocation. Functionally, component of the F(0) channel, it forms part of the peripheral stalk, linking F(1) to F(0). The b'-subunit is a diverged and duplicated form of b found in plants and photosynthetic bacteria. This Antithamnion sp. (Red alga) protein is ATP synthase subunit b', chloroplastic.